Here is a 657-residue protein sequence, read N- to C-terminus: Glycogen debranching enzyme (657 aa).

The active-site Nucleophile is the Asp-336. The Proton donor role is filled by Glu-371. Residues Asn-458–Asp-467 show a composition bias toward basic and acidic residues. A disordered region spans residues Asn-458–Lys-479.

This sequence belongs to the glycosyl hydrolase 13 family.

The catalysed reaction is Hydrolysis of (1-&gt;6)-alpha-D-glucosidic linkages to branches with degrees of polymerization of three or four glucose residues in limit dextrin.. It functions in the pathway glycan degradation; glycogen degradation. Its function is as follows. Removes maltotriose and maltotetraose chains that are attached by 1,6-alpha-linkage to the limit dextrin main chain, generating a debranched limit dextrin. The protein is Glycogen debranching enzyme of Escherichia coli (strain SE11).